A 199-amino-acid chain; its full sequence is MKEIISVTILLILIMDPLGNLPIFMSILKHLEPQRRKKILIREMMIALLIMLLFLFAGEKILIFLNLRAETVSVSGGIILFLIAIKMIFPTYESKKKSGNIIKREEPFLVPLAIPLVAGPSLLATLMLLSHQYPKKILYLIGSLLIAWMITVVILLLSDIFLRLFGSKGVNALERLMGLILIMLSTQMFLDGIKSWFYI.

6 helical membrane-spanning segments follow: residues 7–29 (VTIL…SILK), 39–58 (ILIR…LFAG), 71–93 (TVSV…PTYE), 108–130 (FLVP…MLLS), 137–156 (ILYL…VILL), and 176–198 (LMGL…SWFY).

It belongs to the UPF0056 (MarC) family.

It is found in the cell membrane. This chain is UPF0056 membrane protein bbp_399, found in Buchnera aphidicola subsp. Baizongia pistaciae (strain Bp).